The chain runs to 450 residues: Glucose-6-phosphate isomerase (450 aa).

E291 functions as the Proton donor in the catalytic mechanism. Active-site residues include H312 and K426.

Belongs to the GPI family.

It is found in the cytoplasm. The enzyme catalyses alpha-D-glucose 6-phosphate = beta-D-fructose 6-phosphate. The protein operates within carbohydrate biosynthesis; gluconeogenesis. Its pathway is carbohydrate degradation; glycolysis; D-glyceraldehyde 3-phosphate and glycerone phosphate from D-glucose: step 2/4. In terms of biological role, catalyzes the reversible isomerization of glucose-6-phosphate to fructose-6-phosphate. The polypeptide is Glucose-6-phosphate isomerase (Clostridium perfringens (strain SM101 / Type A)).